Here is a 530-residue protein sequence, read N- to C-terminus: Metal transporter Nramp5 (530 aa).

Polar residues predominate over residues 1 to 10; the sequence is MTGSTVSRQE. Residues 1–53 form a disordered region; it reads MTGSTVSRQENSPKRPNDSNGEFKRLLVPETSQPEEDELHESPPENQILNVEE. Basic and acidic residues predominate over residues 11–27; sequence NSPKRPNDSNGEFKRLL. 12 helical membrane-spanning segments follow: residues 65 to 85, 98 to 118, 147 to 167, 179 to 199, 207 to 227, 253 to 273, 299 to 319, 341 to 361, 387 to 407, 429 to 449, 458 to 478, and 485 to 505; these read FSWA…IAFL, AVAG…GLLM, ILLW…EVIG, FLPI…ISYL, LEGL…WMFN, AVGV…SALV, AALF…AKGF, YGGG…AAGQ, LSAF…AIMF, IPFA…MGVF, LAWT…LDFF, and FLVG…IIYL.

Belongs to the NRAMP (TC 2.A.55) family.

It localises to the membrane. In terms of biological role, seems to be involved in iron uptake. The sequence is that of Metal transporter Nramp5 (NRAMP5) from Arabidopsis thaliana (Mouse-ear cress).